The chain runs to 135 residues: Large ribosomal subunit protein uL16c (135 aa).

It belongs to the universal ribosomal protein uL16 family. Part of the 50S ribosomal subunit.

It is found in the plastid. The protein localises to the chloroplast. This chain is Large ribosomal subunit protein uL16c, found in Morus indica (Mulberry).